A 539-amino-acid chain; its full sequence is Keratin, type II cytoskeletal 73 (539 aa).

A head region spans residues 1-130; it reads MNRQFTCKPG…DPEIQKVRAQ (130 aa). A coil 1A region spans residues 131–166; the sequence is EREQIKALNNKFASFIDKVRFLEQQNQVLQTKWELL. The IF rod domain maps to 131 to 444; sequence EREQIKALNN…KLLEGEECRM (314 aa). Residues 167–185 form a linker 1 region; sequence QQLDLSNCRRNLEPVYEAH. The coil 1B stretch occupies residues 186–277; sequence ISSLQKQLDS…CLYEGEITQM (92 aa). The interval 278–301 is linker 12; the sequence is QSHISDTSVVLSMDNNRNLDLDSI. A coil 2 region spans residues 302 to 440; it reads IAEVRAQYED…ATYRKLLEGE (139 aa). A tail region spans residues 441–539; it reads ECRMSGEHTS…LGSPSKKTMR (99 aa).

It belongs to the intermediate filament family. In terms of assembly, heterotetramer of two type I and two type II keratins.

Has a role in hair formation. Specific component of keratin intermediate filaments in the inner root sheath (IRS) of the hair follicle. The chain is Keratin, type II cytoskeletal 73 (Krt73) from Mus musculus (Mouse).